The following is a 778-amino-acid chain: Dynein axonemal intermediate chain 4 (778 aa).

WD repeat units lie at residues 477 to 517, 526 to 573, 586 to 629, 633 to 673, 676 to 715, and 721 to 760; these read HCES…QTPI, LHTS…ECVD, RHIS…QYLE, AHKR…PVMG, SGQRVVFDIMWSPHCATVFGAVSEGKVEIWDLRVSSLDPT, and SPGVNPTALLFSPETDCVLVGDSEGQVTVYKLKNITAGGG.

Part of the multisubunit axonemal dynein complex formed at least of two heavy chains and a number of intermediate and light chains.

Its subcellular location is the cytoplasm. The protein localises to the cytoskeleton. It localises to the flagellum axoneme. It is found in the cilium axoneme. The protein resides in the dynein axonemal particle. Its function is as follows. Plays a critical role in the assembly of axonemal dynein complex. Plays a key role in ciliary motility. The polypeptide is Dynein axonemal intermediate chain 4 (Danio rerio (Zebrafish)).